The following is a 204-amino-acid chain: UPF0637 protein SA0957 (204 aa).

This sequence belongs to the UPF0637 family.

The polypeptide is UPF0637 protein SA0957 (Staphylococcus aureus (strain N315)).